We begin with the raw amino-acid sequence, 796 residues long: U-box domain-containing protein 51 (796 aa).

Disordered stretches follow at residues 163 to 195 (DMDT…SSHQ), 218 to 240 (TNIG…SLDV), and 270 to 292 (RSSQ…SSSQ). Residues 171-181 (ADDRSESRFSS) are compositionally biased toward basic and acidic residues. The segment covering 182 to 195 (DSHSGTVSSTSSHQ) has biased composition (low complexity). The span at 270-291 (RSSQMEEASSSSTYSDPTSSSS) shows a compositional bias: low complexity. Residues 298 to 407 (ELEKLKIELR…QRLEDALEGG (110 aa)) are a coiled coil. The 272-residue stretch at 429 to 700 (FSDELKIGVG…DLGKEILPVL (272 aa)) folds into the Protein kinase domain. ATP is bound by residues 435–443 (IGVGGYGSV) and lysine 456. Aspartate 557 acts as the Proton acceptor in catalysis. Positions 724 to 796 (NAPTHFYCPI…IKEWRSQLIK (73 aa)) constitute a U-box domain.

The protein belongs to the protein kinase superfamily. Ser/Thr protein kinase family.

The enzyme catalyses L-seryl-[protein] + ATP = O-phospho-L-seryl-[protein] + ADP + H(+). The catalysed reaction is L-threonyl-[protein] + ATP = O-phospho-L-threonyl-[protein] + ADP + H(+). It catalyses the reaction S-ubiquitinyl-[E2 ubiquitin-conjugating enzyme]-L-cysteine + [acceptor protein]-L-lysine = [E2 ubiquitin-conjugating enzyme]-L-cysteine + N(6)-ubiquitinyl-[acceptor protein]-L-lysine.. The protein operates within protein modification; protein ubiquitination. In terms of biological role, functions as an E3 ubiquitin ligase. The sequence is that of U-box domain-containing protein 51 (PUB51) from Arabidopsis thaliana (Mouse-ear cress).